Here is a 517-residue protein sequence, read N- to C-terminus: Crotonobetaine/carnitine--CoA ligase (517 aa).

This sequence belongs to the ATP-dependent AMP-binding enzyme family.

It carries out the reaction 4-(trimethylamino)butanoate + ATP + CoA = 4-(trimethylamino)butanoyl-CoA + AMP + diphosphate. It catalyses the reaction crotonobetaine + ATP + CoA = crotonobetainyl-CoA + AMP + diphosphate. The catalysed reaction is (R)-carnitine + ATP + CoA = (R)-carnitinyl-CoA + AMP + diphosphate. The protein operates within amine and polyamine metabolism; carnitine metabolism. Its function is as follows. Catalyzes the transfer of CoA to carnitine, generating the initial carnitinyl-CoA needed for the CaiB reaction cycle. Also has activity toward crotonobetaine and gamma-butyrobetaine. The sequence is that of Crotonobetaine/carnitine--CoA ligase from Salmonella heidelberg (strain SL476).